A 439-amino-acid polypeptide reads, in one-letter code: Enolase 1 (439 aa).

Residues His-160 and Glu-169 each coordinate substrate. Catalysis depends on Glu-212, which acts as the Proton donor. Mg(2+) contacts are provided by Asp-247, Glu-296, and Asp-323. Residues Glu-296 and Asp-323 each contribute to the substrate site. Catalysis depends on Lys-348, which acts as the Proton acceptor. Substrate is bound by residues 375–378 and Lys-399; that span reads SHRS.

Belongs to the enolase family. As to quaternary structure, homodimer. Mg(2+) serves as cofactor.

It is found in the cytoplasm. It catalyses the reaction (2R)-2-phosphoglycerate = phosphoenolpyruvate + H2O. It functions in the pathway carbohydrate degradation; glycolysis; pyruvate from D-glyceraldehyde 3-phosphate: step 4/5. This chain is Enolase 1 (ENO1), found in Debaryomyces hansenii (strain ATCC 36239 / CBS 767 / BCRC 21394 / JCM 1990 / NBRC 0083 / IGC 2968) (Yeast).